The following is a 480-amino-acid chain: Glutarate-semialdehyde dehydrogenase (480 aa).

Residues 156-157 (WN), 180-183 (KPAS), and 233-234 (GS) contribute to the NADP(+) site. Glu-255 acts as the Proton acceptor in catalysis. Position 256 (Leu-256) interacts with NADP(+). Catalysis depends on Cys-289, which acts as the Nucleophile. Glu-384 contributes to the NADP(+) binding site.

This sequence belongs to the aldehyde dehydrogenase family.

The enzyme catalyses 5-oxopentanoate + NADP(+) + H2O = glutarate + NADPH + 2 H(+). It participates in amino-acid degradation. Catalyzes the conversion of 5-oxopentanoate (glutarate semialdehyde) to glutarate. Involved in L-lysine degradation. The polypeptide is Glutarate-semialdehyde dehydrogenase (Pseudomonas putida (strain ATCC 47054 / DSM 6125 / CFBP 8728 / NCIMB 11950 / KT2440)).